We begin with the raw amino-acid sequence, 317 residues long: MLTFQHIILRLQDYWDRQGCALLQPYDMEVGAGTSHTATFLRALGPEPWKAAYVQPSRRPKDGRYGNNPNRLQHYYQYQVVLKPAPANILDLYLGSLEALGFDLKKNDIRFVEDDWENPTLGAWGLGWEVWLNGMEVTQFTYFQQVGGIDCKPITGEITYGLERLAMYLQGVENVYDLQYAPGLTYGDVFHQNEVEQSTYNFEHSNVEFLLSAFGAHEGNAQELMAQQLALPAYEQVLKAAHTFNLLDARGAISVTERAAYIGRIRNLARAVAAAYLDSRARLGFPMAPRAWADEIGAKLAAEAEKAALKNEAKKAA.

It belongs to the class-II aminoacyl-tRNA synthetase family. Tetramer of two alpha and two beta subunits.

It is found in the cytoplasm. The enzyme catalyses tRNA(Gly) + glycine + ATP = glycyl-tRNA(Gly) + AMP + diphosphate. In Leptothrix cholodnii (strain ATCC 51168 / LMG 8142 / SP-6) (Leptothrix discophora (strain SP-6)), this protein is Glycine--tRNA ligase alpha subunit.